Here is a 280-residue protein sequence, read N- to C-terminus: Dual adapter for phosphotyrosine and 3-phosphotyrosine and 3-phosphoinositide (280 aa).

The segment at 1-20 (MGRAELLEGKMSTQDPSDLW) is disordered. Residues 35-129 (WYHGNLTRHA…GTLMVLKHPY (95 aa)) form the SH2 domain. A Phosphotyrosine modification is found at Tyr-139. Ser-141 is subject to Phosphoserine. One can recognise a PH domain in the interval 164-259 (LGTKEGYLTK…WIKILRWKLS (96 aa)).

As to quaternary structure, interacts with PtdIns(3,4,5)P3 and PLCG2. In vitro, interacts with PtdIns(3,4)P2. In terms of processing, phosphorylated on tyrosine residues. In terms of tissue distribution, highly expressed in placenta and lung, followed by brain, heart, kidney, liver, pancreas and skeletal muscle. Expressed by B-lymphocytes, but not T-lymphocytes or nonhematopoietic cells.

Its subcellular location is the cytoplasm. The protein localises to the membrane. Its function is as follows. May act as a B-cell-associated adapter that regulates B-cell antigen receptor (BCR)-signaling downstream of PI3K. This is Dual adapter for phosphotyrosine and 3-phosphotyrosine and 3-phosphoinositide (DAPP1) from Homo sapiens (Human).